Here is a 122-residue protein sequence, read N- to C-terminus: Large ribosomal subunit protein bL12 (122 aa).

This sequence belongs to the bacterial ribosomal protein bL12 family. As to quaternary structure, homodimer. Part of the ribosomal stalk of the 50S ribosomal subunit. Forms a multimeric L10(L12)X complex, where L10 forms an elongated spine to which 2 to 4 L12 dimers bind in a sequential fashion. Binds GTP-bound translation factors.

In terms of biological role, forms part of the ribosomal stalk which helps the ribosome interact with GTP-bound translation factors. Is thus essential for accurate translation. This Buchnera aphidicola subsp. Acyrthosiphon pisum (strain Tuc7) protein is Large ribosomal subunit protein bL12.